A 144-amino-acid polypeptide reads, in one-letter code: Ribosomal RNA large subunit methyltransferase H (144 aa).

S-adenosyl-L-methionine contacts are provided by residues leucine 68, glycine 96, and 112-117 (FSKLTF).

The protein belongs to the RNA methyltransferase RlmH family. As to quaternary structure, homodimer.

Its subcellular location is the cytoplasm. It carries out the reaction pseudouridine(1915) in 23S rRNA + S-adenosyl-L-methionine = N(3)-methylpseudouridine(1915) in 23S rRNA + S-adenosyl-L-homocysteine + H(+). Specifically methylates the pseudouridine at position 1915 (m3Psi1915) in 23S rRNA. The polypeptide is Ribosomal RNA large subunit methyltransferase H (Mycoplasmopsis synoviae (strain 53) (Mycoplasma synoviae)).